We begin with the raw amino-acid sequence, 394 residues long: Envelope glycoprotein D (394 aa).

The N-terminal stretch at 1–25 is a signal peptide; that stretch reads MGGAAARLGAVILFVVIVGLHGVRS. Positions 26–57 are interaction with TNFRSF14; sequence KYALVDASLKMADPNRFRGKDLPVLDQLTDPP. Residues 26 to 340 are Virion surface-facing; sequence KYALVDASLK…YHPPATPNNM (315 aa). Residue His64 coordinates Zn(2+). 3 disulfide bridges follow: Cys91–Cys214, Cys131–Cys227, and Cys143–Cys152. Residues Asn119 and Asn146 are each glycosylated (N-linked (GlcNAc...) asparagine; by host). Asp240 is a binding site for Zn(2+). Residues 261-305 form a profusion region; sequence LKIAGWHGPKAPYTSTLLPPELSETPNATQPELAPEDPEDSALLE. The interval 275–301 is disordered; the sequence is STLLPPELSETPNATQPELAPEDPEDS. An N-linked (GlcNAc...) asparagine; by host glycan is attached at Asn287. The chain crosses the membrane as a helical span at residues 341–361; it reads GLIAGAVGGSLLAALVICGIV. Topologically, residues 362 to 394 are intravirion; the sequence is YWMRRHTQKAPKRIRLPHIREDDQPSSHQPLFY. A disordered region spans residues 375–394; it reads IRLPHIREDDQPSSHQPLFY.

The protein belongs to the herpesviridae glycoprotein D family. Homodimer. Interacts with host receptor TNFRSF14. Interacts with host receptor NECTIN1. Interacts (via profusion domain) with gB; this interaction occurs in the absence of gH/gL. Interacts (via profusion domain) with gH/gL heterodimer; this interaction occurs in the absence of gB. Associates with the gB-gH/gL-gD complex. Interacts (via C-terminus) with UL11 tegument protein. Interacts (via C-terminus) with VP22 tegument protein; this interaction has been demonstrated in other strains, but might be very weak since PubMed:19279114 has failed to see it. Interacts with host RSAD2.

The protein localises to the virion membrane. The protein resides in the host Golgi apparatus. Its function is as follows. Envelope glycoprotein that binds to the host cell entry receptors NECTIN1, TNFRSF14/HVEM and 3-O-sulfated heparan sulfate, promoting the virus entry into host cells. May trigger fusion with host membrane, by recruiting the fusion machinery composed of gB and gH/gL. In Homo sapiens (Human), this protein is Envelope glycoprotein D (gD).